A 494-amino-acid polypeptide reads, in one-letter code: Glucose-6-phosphate exchanger SLC37A2 (494 aa).

Residues 20–37 (YRFSILFLTFVFYTSYHL) form a helical membrane-spanning segment. N-linked (GlcNAc...) asparagine glycans are attached at residues Asn-52, Asn-63, and Asn-67. The next 11 membrane-spanning stretches (helical) occupy residues 85–105 (FGVL…FSGI), 116–136 (LSTG…GFYW), 146–166 (LVQA…VACV), 187–207 (SVGN…AWGL), 208–228 (SFIV…LFLV), 295–315 (LCLL…PLYI), 327–347 (GDLS…AGLV), 355–375 (ASTC…YNKI), 384–404 (VGML…ITTA), 427–447 (AIID…AGLI), and 455–475 (VFYM…RLVY).

It belongs to the major facilitator superfamily. Organophosphate:Pi antiporter (OPA) (TC 2.A.1.4) family.

Its subcellular location is the endoplasmic reticulum membrane. The catalysed reaction is D-glucose 6-phosphate(in) + phosphate(out) = D-glucose 6-phosphate(out) + phosphate(in). Inorganic phosphate and glucose-6-phosphate antiporter. May transport cytoplasmic glucose-6-phosphate into the lumen of the endoplasmic reticulum and translocate inorganic phosphate into the opposite direction. The chain is Glucose-6-phosphate exchanger SLC37A2 from Danio rerio (Zebrafish).